We begin with the raw amino-acid sequence, 461 residues long: Photosystem II CP43 reaction center protein (461 aa).

A propeptide spanning residues 1–2 is cleaved from the precursor; sequence ME. Position 3 is an N-acetylthreonine (Thr-3). Thr-3 bears the Phosphothreonine mark. The next 5 membrane-spanning stretches (helical) occupy residues 57–81, 122–143, 166–188, 243–263, and 279–300; these read LFEV…PHLA, LIGP…KDKN, KAMY…RVIT, KPWA…LSYS, and WFNN…ASQS. Glu-355 provides a ligand contact to [CaMn4O5] cluster. The helical transmembrane segment at 435 to 459 threads the bilayer; that stretch reads RARAAAAGFEKGIDRDNEPVLSMKP.

Belongs to the PsbB/PsbC family. PsbC subfamily. In terms of assembly, PSII is composed of 1 copy each of membrane proteins PsbA, PsbB, PsbC, PsbD, PsbE, PsbF, PsbH, PsbI, PsbJ, PsbK, PsbL, PsbM, PsbT, PsbX, PsbY, PsbZ, Psb30/Ycf12, at least 3 peripheral proteins of the oxygen-evolving complex and a large number of cofactors. It forms dimeric complexes. Binds multiple chlorophylls and provides some of the ligands for the Ca-4Mn-5O cluster of the oxygen-evolving complex. It may also provide a ligand for a Cl- that is required for oxygen evolution. PSII binds additional chlorophylls, carotenoids and specific lipids. serves as cofactor.

It is found in the plastid. The protein resides in the chloroplast thylakoid membrane. One of the components of the core complex of photosystem II (PSII). It binds chlorophyll and helps catalyze the primary light-induced photochemical processes of PSII. PSII is a light-driven water:plastoquinone oxidoreductase, using light energy to abstract electrons from H(2)O, generating O(2) and a proton gradient subsequently used for ATP formation. The sequence is that of Photosystem II CP43 reaction center protein from Tupiella akineta (Green alga).